Reading from the N-terminus, the 227-residue chain is Transcriptional regulatory protein CpxR homolog (227 aa).

Residues Lys3–Leu115 enclose the Response regulatory domain. At Asp51 the chain carries 4-aspartylphosphate. The segment at residues Val128–Thr227 is a DNA-binding region (ompR/PhoB-type).

Post-translationally, phosphorylated.

The protein resides in the cytoplasm. In terms of biological role, member of a two-component regulatory system. The sequence is that of Transcriptional regulatory protein CpxR homolog (cpxR) from Haemophilus influenzae (strain ATCC 51907 / DSM 11121 / KW20 / Rd).